A 182-amino-acid chain; its full sequence is Ribosome maturation factor RimM (182 aa).

The PRC barrel domain maps to 103–182 (VGDYYWKDLI…TIEVDWDPGF (80 aa)).

Belongs to the RimM family. As to quaternary structure, binds ribosomal protein uS19.

The protein localises to the cytoplasm. In terms of biological role, an accessory protein needed during the final step in the assembly of 30S ribosomal subunit, possibly for assembly of the head region. Essential for efficient processing of 16S rRNA. May be needed both before and after RbfA during the maturation of 16S rRNA. It has affinity for free ribosomal 30S subunits but not for 70S ribosomes. This chain is Ribosome maturation factor RimM, found in Pectobacterium atrosepticum (strain SCRI 1043 / ATCC BAA-672) (Erwinia carotovora subsp. atroseptica).